A 907-amino-acid polypeptide reads, in one-letter code: MLGKLLTKLFGSRNDRTLKNLGKIVTQINALEADFQKLSDDELKAKTLEFRERLEKGETLDDIMAEAFATVREASVRVFEMRPFDVQLLGGMVLNSNRIAEMRTGEGKTLTATLPAYLNGLSGKGVHVITVNDYLAGRDAENNRPLFEFLGLTVGINVAGIGQAEKKMAYAADITYGTNNEFGFDYLRDNMAFSPQERVQRPLHYALIDEVDSILIDEARTPLIISGAAEDSSEHYRKVNVLIPSLIRQEKEDTEDEVGEGDYSIDEKGKQVHLTERGQEKVELLLIESGMLAEGDSLYSAANISLLHHVNAALRAHTLFEKDVDYIVQDNEVIIVDEHTGRTMPGRRWSEGLHQAVEAKEGVHIQNENQTLASITFQNYFRQYEKLAGMTGTADTEAFEFQHIYGLDTVVVPTNKPMVRNDMADLVYLTASEKYAAIIKDVEGCRERGQPVLVGTVSIEQSELLASLLKNAKIPHSVLNAKFHEKEAEIVAQAGRTGAVTIATNMAGRGTDIVLGGNWKVEIENLTNPTDEQIAKIRADWQIHHDAVIAAGGLHILGTERHESRRIDNQLRGRSGRQGDAGSSRFYLSMEDSLMRIFASERVSGMMKKLGMEEGEAIEHPWVSRAIENAQRKVEARNFDIRKQLLEYDDVANDQRQVVYSQRNELMDATSIQDTIKNIEADVINDLVDQYIPRQSLEELWDVPGLEQRFHQEFGIQLPIQQWLEKEEDLHEETLRERIVASWSDAYQAKEAMVGADVLRQFEKAVMLQTLDGLWKEHLAAMDHLRQGIHLRGYAQKNPKQEYKRESFELFQQMLDSLKHDVISVLSKVQVQAQSDVDDMEQRRREEEAKIQRDYQHAAAEALTDESQASSDNTPKTMIREGDKVGRNDPCPCGSGKKYKQCHGKLS.

Residues Gln87, 105-109 (GEGKT), and Asp512 each bind ATP. The interval 834–907 (QSDVDDMEQR…KYKQCHGKLS (74 aa)) is disordered. Residues 840–856 (MEQRRREEEAKIQRDYQ) are compositionally biased toward basic and acidic residues. The span at 865 to 876 (DESQASSDNTPK) shows a compositional bias: polar residues. Over residues 878-887 (MIREGDKVGR) the composition is skewed to basic and acidic residues. Cys891, Cys893, Cys902, and His903 together coordinate Zn(2+). The segment covering 897-907 (KKYKQCHGKLS) has biased composition (basic residues).

Belongs to the SecA family. Monomer and homodimer. Part of the essential Sec protein translocation apparatus which comprises SecA, SecYEG and auxiliary proteins SecDF-YajC and YidC. The cofactor is Zn(2+).

It localises to the cell inner membrane. Its subcellular location is the cytoplasm. The catalysed reaction is ATP + H2O + cellular proteinSide 1 = ADP + phosphate + cellular proteinSide 2.. In terms of biological role, part of the Sec protein translocase complex. Interacts with the SecYEG preprotein conducting channel. Has a central role in coupling the hydrolysis of ATP to the transfer of proteins into and across the cell membrane, serving both as a receptor for the preprotein-SecB complex and as an ATP-driven molecular motor driving the stepwise translocation of polypeptide chains across the membrane. The polypeptide is Protein translocase subunit SecA (Shewanella denitrificans (strain OS217 / ATCC BAA-1090 / DSM 15013)).